The chain runs to 211 residues: Ribosome maturation factor RimM (211 aa).

The region spanning 111 to 182 (PDAWYDHQLV…TLVVTPPLGL (72 aa)) is the PRC barrel domain. The disordered stretch occupies residues 184-211 (EEIPDETPTAEPTPAEAAEPAPEGDDAR). The segment covering 189 to 204 (ETPTAEPTPAEAAEPA) has biased composition (low complexity).

This sequence belongs to the RimM family. Binds ribosomal protein uS19.

Its subcellular location is the cytoplasm. An accessory protein needed during the final step in the assembly of 30S ribosomal subunit, possibly for assembly of the head region. Essential for efficient processing of 16S rRNA. May be needed both before and after RbfA during the maturation of 16S rRNA. It has affinity for free ribosomal 30S subunits but not for 70S ribosomes. In Clavibacter michiganensis subsp. michiganensis (strain NCPPB 382), this protein is Ribosome maturation factor RimM.